Consider the following 203-residue polypeptide: Apoptosis-associated speck-like protein containing a CARD (203 aa).

The region spanning 1–91 is the Pyrin domain; sequence MAESFKEHLQ…DDLLRNTGQS (91 aa). The CARD domain maps to 112–203; the sequence is VAFSKVNFID…FLMDDLEDAE (92 aa).

Self-associates (via pyrin and CARD domains). Interacts (via pyrin domain) with caspa (via pyrin domain). Interacts with caspb; the interaction only occurs in the presence of nlrp1. Component of NLRP1 inflammasomes. Inflammasomes are supramolecular complexes that assemble in the cytosol in response to pathogens and other damage-associated signals and play critical roles in innate immunity and inflammation. The NLRP1 inflammasome is composed of the signal sensor nlrp1, and the adapter pycard (asc), which recruit effector pro-inflammatory caspases caspa and/or caspb. The interaction between nlrp1 and pycard is required for the sequential recruitment of caspa and then caspb. Within the complex caspa is preferentially recruited first and this causes the cleavage of pro-il1b into the midformed il1b. This is followed by the recruitment of caspb, which is activated and cleaves the midformed il1b resulting in il1b maturation. Interacts (via pyrin domain) with NLP3X1 (via pyrin domain). Interacts with gbp4. In terms of tissue distribution, expressed in the kidney, intestine and gill. Expressed at low levels in the heart.

It is found in the cytoplasm. It localises to the inflammasome. In terms of biological role, functions as a key mediator in apoptosis and inflammation. Promotes caspase-mediated apoptosis. Induces proteolytic processing of caspa and caspa-dependent apoptosis. Involved in innate immune response by acting as an integral adapter in the assembly of various inflammasomes which recruit and activate caspase-1 leading to processing and secretion of pro-inflammatory cytokines. Caspase-1-dependent inflammation leads to macrophage pyroptosis, a form of cell death. The function as activating adapter in different types of inflammasomes is mediated by the pyrin and CARD domains and their homotypic interactions. Clustered PYCARD nucleates the formation of caspase-1 filaments through the interaction of their respective CARD domains, acting as a platform for of caspase-1 polymerization. Also involved in transcriptional activation of cytokines and chemokines independent of the inflammasome. The protein is Apoptosis-associated speck-like protein containing a CARD (pycard) of Danio rerio (Zebrafish).